The following is a 449-amino-acid chain: GTPase Der (449 aa).

EngA-type G domains lie at 3-167 (SIVA…PDEP) and 175-350 (TNIA…EQYS). Residues 9–16 (GRPNVGKS), 56–60 (DTGGF), 119–122 (NKVD), 181–188 (GRPNVGKS), 228–232 (DTAGI), and 293–296 (NKWD) contribute to the GTP site. In terms of domain architecture, KH-like spans 351–435 (RRVTTSELNR…PFRLLFRGRE (85 aa)).

This sequence belongs to the TRAFAC class TrmE-Era-EngA-EngB-Septin-like GTPase superfamily. EngA (Der) GTPase family. In terms of assembly, associates with the 50S ribosomal subunit.

GTPase that plays an essential role in the late steps of ribosome biogenesis. This chain is GTPase Der, found in Trichlorobacter lovleyi (strain ATCC BAA-1151 / DSM 17278 / SZ) (Geobacter lovleyi).